The following is a 210-amino-acid chain: Thymidylate kinase (210 aa).

10 to 17 (GPEGAGKS) provides a ligand contact to ATP.

It belongs to the thymidylate kinase family.

The catalysed reaction is dTMP + ATP = dTDP + ADP. Its function is as follows. Phosphorylation of dTMP to form dTDP in both de novo and salvage pathways of dTTP synthesis. This Pseudomonas savastanoi pv. phaseolicola (strain 1448A / Race 6) (Pseudomonas syringae pv. phaseolicola (strain 1448A / Race 6)) protein is Thymidylate kinase.